Consider the following 198-residue polypeptide: dITP/XTP pyrophosphatase (198 aa).

A substrate-binding site is contributed by 8–13; the sequence is TKNKGK. Asp-69 acts as the Proton acceptor in catalysis. Mg(2+) is bound at residue Asp-69. Substrate contacts are provided by residues Ser-70, 152 to 155, Lys-175, and 180 to 181; these read FGYD and HR.

It belongs to the HAM1 NTPase family. As to quaternary structure, homodimer. Mg(2+) serves as cofactor.

The catalysed reaction is XTP + H2O = XMP + diphosphate + H(+). The enzyme catalyses dITP + H2O = dIMP + diphosphate + H(+). It carries out the reaction ITP + H2O = IMP + diphosphate + H(+). Functionally, pyrophosphatase that catalyzes the hydrolysis of nucleoside triphosphates to their monophosphate derivatives, with a high preference for the non-canonical purine nucleotides XTP (xanthosine triphosphate), dITP (deoxyinosine triphosphate) and ITP. Seems to function as a house-cleaning enzyme that removes non-canonical purine nucleotides from the nucleotide pool, thus preventing their incorporation into DNA/RNA and avoiding chromosomal lesions. The sequence is that of dITP/XTP pyrophosphatase from Shouchella clausii (strain KSM-K16) (Alkalihalobacillus clausii).